The primary structure comprises 708 residues: DNA ligase (708 aa).

NAD(+)-binding positions include 35–39 (DADYD), 84–85 (SL), and Glu118. Lys120 acts as the N6-AMP-lysine intermediate in catalysis. NAD(+)-binding residues include Arg141, Glu182, Lys303, and Lys327. Zn(2+)-binding residues include Cys419, Cys422, Cys437, and Cys443. In terms of domain architecture, BRCT spans 628–708 (TRASEVSGKT…GWAKIVADAQ (81 aa)).

It belongs to the NAD-dependent DNA ligase family. LigA subfamily. Mg(2+) is required as a cofactor. Mn(2+) serves as cofactor.

It carries out the reaction NAD(+) + (deoxyribonucleotide)n-3'-hydroxyl + 5'-phospho-(deoxyribonucleotide)m = (deoxyribonucleotide)n+m + AMP + beta-nicotinamide D-nucleotide.. In terms of biological role, DNA ligase that catalyzes the formation of phosphodiester linkages between 5'-phosphoryl and 3'-hydroxyl groups in double-stranded DNA using NAD as a coenzyme and as the energy source for the reaction. It is essential for DNA replication and repair of damaged DNA. This is DNA ligase from Rhizorhabdus wittichii (strain DSM 6014 / CCUG 31198 / JCM 15750 / NBRC 105917 / EY 4224 / RW1) (Sphingomonas wittichii).